The primary structure comprises 347 residues: Methylthioribose-1-phosphate isomerase (347 aa).

Substrate-binding positions include 45–47 (RGA), R88, and Q197. The Proton donor role is filled by D238. Position 248-249 (248-249 (NK)) interacts with substrate.

Belongs to the eIF-2B alpha/beta/delta subunits family. MtnA subfamily.

The catalysed reaction is 5-(methylsulfanyl)-alpha-D-ribose 1-phosphate = 5-(methylsulfanyl)-D-ribulose 1-phosphate. Its pathway is amino-acid biosynthesis; L-methionine biosynthesis via salvage pathway; L-methionine from S-methyl-5-thio-alpha-D-ribose 1-phosphate: step 1/6. Functionally, catalyzes the interconversion of methylthioribose-1-phosphate (MTR-1-P) into methylthioribulose-1-phosphate (MTRu-1-P). This Trichormus variabilis (strain ATCC 29413 / PCC 7937) (Anabaena variabilis) protein is Methylthioribose-1-phosphate isomerase.